The primary structure comprises 86 residues: Putative membrane protein insertion efficiency factor (86 aa).

Belongs to the UPF0161 family.

It localises to the cell inner membrane. Its function is as follows. Could be involved in insertion of integral membrane proteins into the membrane. This chain is Putative membrane protein insertion efficiency factor, found in Pseudomonas aeruginosa (strain UCBPP-PA14).